Reading from the N-terminus, the 288-residue chain is MKGIYSALLVSFDKDGNINEKGLREIIRHNIDVCKIDGLYVGGSTGENFMLSTDEKKRIFEIAMDEAKGQVKLIAQVGSVNLKEAVELAKFTTDLGYDAISAVTPFYYKFDFNEIKHYYETIINSVDNKLIIYSIPFLTGVNMSIEQFAELFENDKIIGVKFTAADFYLLERMRKAFPDKLIFAGFDEMMLPATVLGVDGAIGSTFNVNGVRARQIFEAAQKGDIETALEVQHVTNDLITDILNNGLYQTIKLILQEQGVDAGYCRQPMKEATEEMIAKAKEINKKYF.

Aceneuramate is bound by residues S44 and T45. The active-site Proton donor is Y133. K161 serves as the catalytic Schiff-base intermediate with substrate. The aceneuramate site is built by T163, G185, D187, E188, and S204.

Belongs to the DapA family. NanA subfamily. In terms of assembly, homotetramer.

It is found in the cytoplasm. It carries out the reaction aceneuramate = aldehydo-N-acetyl-D-mannosamine + pyruvate. The protein operates within amino-sugar metabolism; N-acetylneuraminate degradation; D-fructose 6-phosphate from N-acetylneuraminate: step 1/5. Functionally, catalyzes the reversible aldol cleavage of N-acetylneuraminic acid (sialic acid; Neu5Ac) to form pyruvate and N-acetylmannosamine (ManNAc) via a Schiff base intermediate. This Clostridium perfringens (strain ATCC 13124 / DSM 756 / JCM 1290 / NCIMB 6125 / NCTC 8237 / Type A) protein is N-acetylneuraminate lyase.